The chain runs to 118 residues: Small ribosomal subunit protein bS6 (118 aa).

A disordered region spans residues 98 to 118 (TAAPAAKVAPVETAPAAEAAE). Residues 99-118 (AAPAAKVAPVETAPAAEAAE) are compositionally biased toward low complexity.

This sequence belongs to the bacterial ribosomal protein bS6 family.

Its function is as follows. Binds together with bS18 to 16S ribosomal RNA. This is Small ribosomal subunit protein bS6 from Geobacter metallireducens (strain ATCC 53774 / DSM 7210 / GS-15).